The following is an 83-amino-acid chain: Disintegrin bitistatin (83 aa).

The 82-residue stretch at 2-83 (PPVCGNKILE…GKSSDCPWNH (82 aa)) folds into the Disintegrin domain. 10 cysteine pairs are disulfide-bonded: Cys5-Cys24, Cys5-Cys34, Cys16-Cys29, Cys16-Cys34, Cys18-Cys24, Cys18-Cys29, Cys28-Cys51, Cys42-Cys48, Cys47-Cys72, and Cys60-Cys79. The Cell attachment site signature appears at 64–66 (RGD).

This sequence belongs to the venom metalloproteinase (M12B) family. P-II subfamily. P-IIa sub-subfamily. In terms of assembly, monomer. Exists in 3 forms in the venom. The forms A, B, and C are present at 53%, 32% and 15%. The forms A and B differ by their disulfide bond pattern in the N-terminal part. No information is known about form C. Expressed by the venom gland.

It is found in the secreted. In terms of biological role, inhibits fibrinogen interaction with platelets. Acts by binding to alpha-IIb/beta-3 (ITGA2B/ITGB3) on the platelet surface and inhibits aggregation induced by ADP, thrombin, platelet-activating factor and collagen. In Bitis arietans (African puff adder), this protein is Disintegrin bitistatin.